The primary structure comprises 479 residues: MSVCVRIAPSPTGNLHIGTARTAVFNWLYARRHGGRFILRIEDTDRDRSLPRYTRNILAGLAWLGLDWDEGPVYQSKRIERYQAVVQQLLDRGLAYRCYVSEAELEEMRAAQKAAGKAPRYDNRHRFLTEAQRRAYEAEGRQPVIRFKIEEPLEVSWVDLIRGPITWNTQDLGGDMVIARADGCPLYNLAVVVDDIDMGITHVIRGEDHIGNTPKQILLYRALGHEPPQFAHSPLILNPEGKKLSKRDGATSVAEFQQLGFLPEALKNYLALLSWSPPDGEELFSLEKAAALFDFDRVNRAAARFDWDKLNWINSQYIKRLSPPELVERLTPFWQAAGFDLSEVPDPTWLEDVARLIADGIDRLAEAPPLSRFLFQEPLSYTLPALEQLRLPGVAEAMAAMATTLAAAELPQVSADSLKPLVDQVAKGQNMKKGLLMKSLRAALTGDLQGPDLLESFALLQRRGWALGRLEAVQKLVPC.

Residues 9 to 19 (PSPTGNLHIGT) carry the 'HIGH' region motif. Positions 243 to 247 (KLSKR) match the 'KMSKS' region motif. K246 provides a ligand contact to ATP.

Belongs to the class-I aminoacyl-tRNA synthetase family. Glutamate--tRNA ligase type 1 subfamily. Monomer.

The protein localises to the cytoplasm. It carries out the reaction tRNA(Glu) + L-glutamate + ATP = L-glutamyl-tRNA(Glu) + AMP + diphosphate. In terms of biological role, catalyzes the attachment of glutamate to tRNA(Glu) in a two-step reaction: glutamate is first activated by ATP to form Glu-AMP and then transferred to the acceptor end of tRNA(Glu). The protein is Glutamate--tRNA ligase of Synechococcus sp. (strain JA-2-3B'a(2-13)) (Cyanobacteria bacterium Yellowstone B-Prime).